Here is a 369-residue protein sequence, read N- to C-terminus: tRNA-specific 2-thiouridylase MnmA (369 aa).

ATP contacts are provided by residues 10–17 and Leu36; that span reads GLSGGVDS. Catalysis depends on Cys97, which acts as the Nucleophile. Cys97 and Cys196 are oxidised to a cystine. Gly122 provides a ligand contact to ATP. The tract at residues 146 to 148 is interaction with tRNA; it reads KDQ. Cys196 serves as the catalytic Cysteine persulfide intermediate. Residues 301-302 form an interaction with tRNA region; the sequence is RY.

It belongs to the MnmA/TRMU family.

Its subcellular location is the cytoplasm. It carries out the reaction S-sulfanyl-L-cysteinyl-[protein] + uridine(34) in tRNA + AH2 + ATP = 2-thiouridine(34) in tRNA + L-cysteinyl-[protein] + A + AMP + diphosphate + H(+). Functionally, catalyzes the 2-thiolation of uridine at the wobble position (U34) of tRNA, leading to the formation of s(2)U34. In Thermosynechococcus vestitus (strain NIES-2133 / IAM M-273 / BP-1), this protein is tRNA-specific 2-thiouridylase MnmA.